We begin with the raw amino-acid sequence, 171 residues long: Crossover junction endodeoxyribonuclease RuvC (171 aa).

Residues D7, E66, and D138 contribute to the active site. Mg(2+)-binding residues include D7, E66, and D138.

It belongs to the RuvC family. As to quaternary structure, homodimer which binds Holliday junction (HJ) DNA. The HJ becomes 2-fold symmetrical on binding to RuvC with unstacked arms; it has a different conformation from HJ DNA in complex with RuvA. In the full resolvosome a probable DNA-RuvA(4)-RuvB(12)-RuvC(2) complex forms which resolves the HJ. The cofactor is Mg(2+).

The protein localises to the cytoplasm. It catalyses the reaction Endonucleolytic cleavage at a junction such as a reciprocal single-stranded crossover between two homologous DNA duplexes (Holliday junction).. The RuvA-RuvB-RuvC complex processes Holliday junction (HJ) DNA during genetic recombination and DNA repair. Endonuclease that resolves HJ intermediates. Cleaves cruciform DNA by making single-stranded nicks across the HJ at symmetrical positions within the homologous arms, yielding a 5'-phosphate and a 3'-hydroxyl group; requires a central core of homology in the junction. The consensus cleavage sequence is 5'-(A/T)TT(C/G)-3'. Cleavage occurs on the 3'-side of the TT dinucleotide at the point of strand exchange. HJ branch migration catalyzed by RuvA-RuvB allows RuvC to scan DNA until it finds its consensus sequence, where it cleaves and resolves the cruciform DNA. The sequence is that of Crossover junction endodeoxyribonuclease RuvC from Thiobacillus denitrificans (strain ATCC 25259 / T1).